Here is an 893-residue protein sequence, read N- to C-terminus: Zinc finger protein 281 (893 aa).

Disordered regions lie at residues 1 to 113 (MKIG…FPSQ), 126 to 148 (IKQE…HHHY), 153 to 172 (AGAE…SHGV), and 198 to 251 (SGSR…GAVL). Residue Lys2 forms a Glycyl lysine isopeptide (Lys-Gly) (interchain with G-Cter in SUMO2) linkage. The segment covering 7–36 (FLSGGGGPSSSGGSGSGGSSGSASGGSGGG) has biased composition (gly residues). Residues Lys100 and Lys127 each participate in a glycyl lysine isopeptide (Lys-Gly) (interchain with G-Cter in SUMO2) cross-link. Positions 127 to 139 (KQEKPADPEEQPS) are enriched in basic and acidic residues. Residues 161 to 170 (GLGGGEGGSH) show a composition bias toward gly residues. Basic and acidic residues predominate over residues 201 to 216 (RTDEHGNQEPKQDANV). Glycyl lysine isopeptide (Lys-Gly) (interchain with G-Cter in SUMO2) cross-links involve residues Lys211, Lys217, Lys223, Lys230, Lys240, and Lys256. 3 consecutive C2H2-type zinc fingers follow at residues 258–280 (HICD…VLIH), 286–308 (FQCS…EKIH), and 314–336 (FGCD…KRTH). Residues Lys298 and Lys322 each participate in a glycyl lysine isopeptide (Lys-Gly) (interchain with G-Cter in SUMO2) cross-link. The C2H2-type 4; atypical zinc finger occupies 342–364 (YKCDTCQQYFSRTDRLLKHRRTC). Residue Lys370 forms a Glycyl lysine isopeptide (Lys-Gly) (interchain with G-Cter in SUMO2) linkage. Residues 371 to 425 (GAASAEPGSSNHNSMGNLAVLSQGNTSSSRRKSKSKSIAIENKEHKTGKTNESQM) form a disordered region. A compositionally biased stretch (polar residues) spans 377 to 396 (PGSSNHNSMGNLAVLSQGNT). Residue Ser392 is modified to Phosphoserine. Glycyl lysine isopeptide (Lys-Gly) (interchain with G-Cter in SUMO2) cross-links involve residues Lys406, Lys413, Lys457, and Lys474. Residue Ser481 is modified to Phosphoserine. Glycyl lysine isopeptide (Lys-Gly) (interchain with G-Cter in SUMO2) cross-links involve residues Lys490, Lys495, Lys536, Lys596, Lys614, and Lys619. A disordered region spans residues 613 to 658 (GKSETQKEDPFNLTEPRVDLHTSGEHSELVQEENLSPGTQTPSNDK). The segment covering 616–641 (ETQKEDPFNLTEPRVDLHTSGEHSEL) has biased composition (basic and acidic residues). Positions 645–658 (ENLSPGTQTPSNDK) are enriched in polar residues. Phosphoserine is present on Ser648. Glycyl lysine isopeptide (Lys-Gly) (interchain with G-Cter in SUMO2) cross-links involve residues Lys658 and Lys667. Positions 775–813 (SSAFQSSSQKLTSQKEQQKNLESSTSFQIPSQELASQID) are enriched in polar residues. The segment at 775-815 (SSAFQSSSQKLTSQKEQQKNLESSTSFQIPSQELASQIDPQ) is disordered. Ser782 is modified (phosphoserine). Residues Lys784, Lys789, and Lys793 each participate in a glycyl lysine isopeptide (Lys-Gly) (interchain with G-Cter in SUMO2) cross-link. Position 805 is a phosphoserine (Ser805). Glycyl lysine isopeptide (Lys-Gly) (interchain with G-Cter in SUMO2) cross-links involve residues Lys816 and Lys838. At Thr886 the chain carries Phosphothreonine.

This sequence belongs to the krueppel C2H2-type zinc-finger protein family. Interacts with NANOG. Associates with the NuRD complex.

It localises to the nucleus. Functionally, transcription repressor that plays a role in regulation of embryonic stem cells (ESCs) differentiation. Required for ESCs differentiation and acts by mediating autorepression of NANOG in ESCs: binds to the NANOG promoter and promotes association of NANOG protein to its own promoter and recruits the NuRD complex, which deacetylates histones. Not required for establishement and maintenance of ESCs. Represses the transcription of a number of genes including GAST, ODC1 and VIM. Binds to the G-rich box in the enhancer region of these genes. The polypeptide is Zinc finger protein 281 (Znf281) (Mus musculus (Mouse)).